We begin with the raw amino-acid sequence, 71 residues long: MIIAFIRLYQYCLSPFLGPSCRFSPSCSHYACEALARHGATRGLVLSVWRIMRCNPWSRGGYDPVPAEPFR.

Belongs to the UPF0161 family.

The protein resides in the cell inner membrane. Its function is as follows. Could be involved in insertion of integral membrane proteins into the membrane. The chain is Putative membrane protein insertion efficiency factor from Nitrosospira multiformis (strain ATCC 25196 / NCIMB 11849 / C 71).